Reading from the N-terminus, the 284-residue chain is Cell wall mannoprotein 1 (284 aa).

Positions methionine 1–alanine 17 are cleaved as a signal peptide. Positions serine 176–threonine 234 are enriched in low complexity. The segment at serine 176 to threonine 252 is disordered.

It belongs to the cell wall mannoprotein 1 family. Post-translationally, galactomannoprotein, glycosylated.

The protein resides in the secreted. Its subcellular location is the cell wall. Functionally, constitutive protein of the cell wall. Antigen target of host humoral immune response. This chain is Cell wall mannoprotein 1, found in Aspergillus fumigatus (Neosartorya fumigata).